Consider the following 120-residue polypeptide: Glycine cleavage system H protein (120 aa).

A Lipoyl-binding domain is found at 17-99; that stretch reads VATVGITAHA…QGAGWLYRLK (83 aa). Lys58 bears the N6-lipoyllysine mark.

It belongs to the GcvH family. As to quaternary structure, the glycine cleavage system is composed of four proteins: P, T, L and H. (R)-lipoate is required as a cofactor.

Functionally, the glycine cleavage system catalyzes the degradation of glycine. The H protein shuttles the methylamine group of glycine from the P protein to the T protein. The polypeptide is Glycine cleavage system H protein (Methylorubrum populi (strain ATCC BAA-705 / NCIMB 13946 / BJ001) (Methylobacterium populi)).